A 140-amino-acid chain; its full sequence is L-fucose mutarotase (140 aa).

His22 (proton donor) is an active-site residue. Substrate-binding positions include Asp30, Arg107, and 129-131 (YGN).

The protein belongs to the RbsD / FucU family. FucU mutarotase subfamily. Homodecamer.

Its subcellular location is the cytoplasm. The enzyme catalyses alpha-L-fucose = beta-L-fucose. It functions in the pathway carbohydrate metabolism; L-fucose metabolism. Involved in the anomeric conversion of L-fucose. This chain is L-fucose mutarotase, found in Salmonella gallinarum (strain 287/91 / NCTC 13346).